The sequence spans 80 residues: Moroidotoxin A (80 aa).

The signal sequence occupies residues 1–27 (MAAVKKHLRFALVAAITIALLVAGSVA). Positions 28–44 (DESSEDIDNIVIKTPLD) are excised as a propeptide. 3 disulfide bridges follow: Cys-48–Cys-65, Cys-53–Cys-67, and Cys-61–Cys-76.

The protein belongs to the gympietide family. As to expression, expressed in trichomes, that are stiff epidermal hairs located on the surface of petioles and leaves. Not expressed in other aerial parts.

Its subcellular location is the secreted. Its function is as follows. Neurotoxin certainly responsible for the defensive, persistent, and painful stings of the giant stinging tree. Inhibits inactivation of Nav1.7/SCN9A sodium channel in sensory neurons by directly interacting with TMEM233, a newly described Nav-interacting protein. Has virtually no effect on Nav1.7/SCN9A function in heterologous expression systems and in neurons that do not express TMEM233. Also weakly but significantly affects Nav1.8/SCN10A. Coexpression of TMEM233 with Nav also confers ExTxA sensitivity to Nav1.1-Nav1.6. On the Nav1.7/SCN9A channel, causes a significant hyperpolarizing shift in the voltage dependence of activation. Its effects on Nav currents are irreversible, with no apparent reduction in activity even after repeated wash steps over 30 minutes. In vivo, induces nocifensive behavior in mice (licking or biting and shaking or lifting of the affected paw) lasting for approximately 1 hour. The chain is Moroidotoxin A from Dendrocnide moroides (Gympie stinging tree).